Reading from the N-terminus, the 498-residue chain is DELTA-thalatoxin-Avl2a (498 aa).

An N-terminal signal peptide occupies residues 1 to 22 (MSPYFKLSSALIFLAITMEALC). A propeptide spanning residues 23 to 35 (SPIENTSTSNKDN) is cleaved from the precursor. Residues 23–359 (SPIENTSTSN…GFLHFGCSFL (337 aa)) form the MACPF domain. Residues 135–159 (AAVTNNIASSEEEVQGLSLNLKAYS) are a coiled coil. 3 disulfide bridges follow: Cys-389–Cys-402, Cys-396–Cys-410, and Cys-412–Cys-422. The EGF-like domain maps to 410 to 422 (CECGGPYDLARTC).

Its subcellular location is the secreted. The protein resides in the nematocyst. Is lethal to mice, and may cause hemolytic activity. The polypeptide is DELTA-thalatoxin-Avl2a (Actineria villosa (Okinawan sea anemone)).